The primary structure comprises 288 residues: Transposase InsF for insertion sequence IS3A (288 aa).

The Integrase catalytic domain maps to 124–287; the sequence is YASGPNQKWA…SPEQFENKNL (164 aa).

This sequence belongs to the transposase IS3/IS150/IS904 family.

Involved in the transposition of the insertion sequence IS3. The polypeptide is Transposase InsF for insertion sequence IS3A (insF1) (Escherichia coli (strain K12)).